The following is a 387-amino-acid chain: Phosphoglycerate kinase (387 aa).

Substrate is bound by residues 21–23 (DLN), Arg36, 59–62 (HLGR), Arg113, and Arg146. ATP-binding positions include Lys197, Glu314, and 340-343 (GGDT).

It belongs to the phosphoglycerate kinase family. Monomer.

Its subcellular location is the cytoplasm. The catalysed reaction is (2R)-3-phosphoglycerate + ATP = (2R)-3-phospho-glyceroyl phosphate + ADP. It functions in the pathway carbohydrate degradation; glycolysis; pyruvate from D-glyceraldehyde 3-phosphate: step 2/5. In Proteus mirabilis (strain HI4320), this protein is Phosphoglycerate kinase.